A 137-amino-acid chain; its full sequence is MIEEKKERKKRRVLQMARFYGAAAFTLITMRLISRAIKVRKYVPSIFQQNYKLPPFSQRNEAMSALTYASAASIGTFSTLIFGFCWALDISTAREFVFKTREFMGVPQALETDTSMDEETSKLTKQLQDLLSSENNK.

2 consecutive transmembrane segments (helical) span residues 20–37 (YGAAAFTLITMRLISRAI) and 66–88 (LTYASAASIGTFSTLIFGFCWAL).

It belongs to the AIM11 family.

It localises to the membrane. The chain is Altered inheritance of mitochondria protein 11 (AIM11) from Saccharomyces cerevisiae (strain YJM789) (Baker's yeast).